Here is a 459-residue protein sequence, read N- to C-terminus: tRNA modification GTPase MnmE (459 aa).

Arg29, Glu91, and Arg130 together coordinate (6S)-5-formyl-5,6,7,8-tetrahydrofolate. A TrmE-type G domain is found at 225–381; it reads GVKVAIVGRP…LEEALEQLVT (157 aa). Asn235 lines the K(+) pocket. Residues 235-240, 254-260, and 279-282 each bind GTP; these read NVGKSS, TDLPGTT, and DTAG. Position 239 (Ser239) interacts with Mg(2+). Positions 254, 256, and 259 each coordinate K(+). Thr260 is a Mg(2+) binding site. Position 459 (Lys459) interacts with (6S)-5-formyl-5,6,7,8-tetrahydrofolate.

This sequence belongs to the TRAFAC class TrmE-Era-EngA-EngB-Septin-like GTPase superfamily. TrmE GTPase family. In terms of assembly, homodimer. Heterotetramer of two MnmE and two MnmG subunits. It depends on K(+) as a cofactor.

The protein resides in the cytoplasm. Functionally, exhibits a very high intrinsic GTPase hydrolysis rate. Involved in the addition of a carboxymethylaminomethyl (cmnm) group at the wobble position (U34) of certain tRNAs, forming tRNA-cmnm(5)s(2)U34. The polypeptide is tRNA modification GTPase MnmE (Synechococcus sp. (strain JA-2-3B'a(2-13)) (Cyanobacteria bacterium Yellowstone B-Prime)).